A 598-amino-acid polypeptide reads, in one-letter code: Elongation factor 4 (598 aa).

A tr-type G domain is found at 5–187 (ANIRNFSIIA…ALVEFIPAPT (183 aa)). Residues 17–22 (DHGKST) and 134–137 (NKID) contribute to the GTP site.

It belongs to the TRAFAC class translation factor GTPase superfamily. Classic translation factor GTPase family. LepA subfamily.

The protein localises to the cell inner membrane. The enzyme catalyses GTP + H2O = GDP + phosphate + H(+). Functionally, required for accurate and efficient protein synthesis under certain stress conditions. May act as a fidelity factor of the translation reaction, by catalyzing a one-codon backward translocation of tRNAs on improperly translocated ribosomes. Back-translocation proceeds from a post-translocation (POST) complex to a pre-translocation (PRE) complex, thus giving elongation factor G a second chance to translocate the tRNAs correctly. Binds to ribosomes in a GTP-dependent manner. This chain is Elongation factor 4, found in Psychrobacter cryohalolentis (strain ATCC BAA-1226 / DSM 17306 / VKM B-2378 / K5).